A 195-amino-acid polypeptide reads, in one-letter code: Elongation factor Ts (195 aa).

The involved in Mg(2+) ion dislocation from EF-Tu stretch occupies residues 81-84; that stretch reads TDFV.

This sequence belongs to the EF-Ts family.

It localises to the cytoplasm. Associates with the EF-Tu.GDP complex and induces the exchange of GDP to GTP. It remains bound to the aminoacyl-tRNA.EF-Tu.GTP complex up to the GTP hydrolysis stage on the ribosome. In Rubrobacter xylanophilus (strain DSM 9941 / JCM 11954 / NBRC 16129 / PRD-1), this protein is Elongation factor Ts.